A 241-amino-acid chain; its full sequence is tRNA (guanine-N(7)-)-methyltransferase (241 aa).

Glu76, Glu101, Asp128, and Asp150 together coordinate S-adenosyl-L-methionine. Asp150 is an active-site residue. Residues Lys154, Asp186, and 219–222 (TRYE) contribute to the substrate site.

The protein belongs to the class I-like SAM-binding methyltransferase superfamily. TrmB family.

The enzyme catalyses guanosine(46) in tRNA + S-adenosyl-L-methionine = N(7)-methylguanosine(46) in tRNA + S-adenosyl-L-homocysteine. It participates in tRNA modification; N(7)-methylguanine-tRNA biosynthesis. Its function is as follows. Catalyzes the formation of N(7)-methylguanine at position 46 (m7G46) in tRNA. The sequence is that of tRNA (guanine-N(7)-)-methyltransferase from Cereibacter sphaeroides (strain ATCC 17023 / DSM 158 / JCM 6121 / CCUG 31486 / LMG 2827 / NBRC 12203 / NCIMB 8253 / ATH 2.4.1.) (Rhodobacter sphaeroides).